We begin with the raw amino-acid sequence, 154 residues long: 17 kDa A-type inclusion protein (154 aa).

The stretch at 17–85 (QKDCSDKLDR…YKRELERDRY (69 aa)) forms a coiled coil. A disordered region spans residues 88-154 (SRYLTSSSDP…DVEPEHPPAF (67 aa)).

The sequence is that of 17 kDa A-type inclusion protein from Bos taurus (Bovine).